A 297-amino-acid polypeptide reads, in one-letter code: Counting factor 45-1 (297 aa).

A signal peptide spans 1–20; the sequence is MNKLISLLLVCLVAIALVNA. The 212-residue stretch at 24-235 folds into the Ch-type lysozyme domain; sequence IDFDSDTVNS…SASTGSGSGS (212 aa). Active-site residues include Asp29, Asp119, and Glu121. Asn166 carries N-linked (GlcNAc...) asparagine glycosylation. The S-G-S motif repeats stretch occupies residues 231–296; that stretch reads SGSGSSSGSS…GSSSGSGSGS (66 aa). Residues 231 to 297 form a disordered region; that stretch reads SGSGSSSGSS…SSSGSGSGSS (67 aa). Positions 234–275 are enriched in low complexity; sequence GSSSGSSSGSSSGSSSGSGSSSGSGSSSGSSSGSGSGSSSSG. Residues 276-297 are compositionally biased toward gly residues; the sequence is SGSGSGSSSGSGSSSGSGSGSS.

This sequence belongs to the glycosyl hydrolase 25 family. Monomer. Component of the counting factor (CF) complex, which includes cf60, cf50, cf45-1 and ctnA.

It localises to the secreted. Cell-counting factor that limits the maximum size of the multicellular structure during aggregation. The sequence is that of Counting factor 45-1 (cf45-1) from Dictyostelium discoideum (Social amoeba).